The following is a 1704-amino-acid chain: Phospholipid-transporting ATPase ABCA3 (1704 aa).

An N-linked (GlcNAc...) asparagine glycan is attached at Asn-14. Residues 22 to 42 (VLVTVLELFLPLLFSGILIWL) form a helical membrane-spanning segment. N-linked (GlcNAc...) asparagine glycosylation is found at Asn-53, Asn-124, Asn-140, and Asn-228. Helical transmembrane passes span 261-283 (YQLP…RAVV), 307-327 (AWFL…TLLF), 344-364 (SLVL…SFMV), 373-393 (IAAA…FFVA), 405-425 (LLSC…IGKF), and 447-467 (FCFG…GLVT). An ABC transporter 1 domain is found at 530-763 (IKIKHLSKVF…YGAGYHMTLV (234 aa)). Position 566–573 (566–573 (GHNGAGKT)) interacts with ATP. A glycan (N-linked (GlcNAc...) asparagine) is linked at Asn-620. The next 7 membrane-spanning stretches (helical) occupy residues 925–945 (MVAA…LAIH), 1100–1120 (IALN…ILAV), 1144–1164 (SALL…LVVF), 1183–1203 (LLLM…SFFF), 1213–1233 (LTIF…IMRI), 1245–1265 (LDHV…SNFY), and 1310–1330 (MAAS…NLLW). A glycan (N-linked (GlcNAc...) asparagine) is linked at Asn-1350. An ABC transporter 2 domain is found at 1381–1614 (LIINELSKVY…FGSGYSLQAK (234 aa)). Residue 1416-1423 (GFNGAGKT) participates in ATP binding.

It belongs to the ABC transporter superfamily. ABCA family. In terms of assembly, homooligomer; disulfide-linked. In terms of processing, N-glycosylated. Localization at intracellular vesicles is accompanied by processing of oligosaccharide from high mannose type to complex type. N-linked glycosylation at Asn-124 and Asn-140 is required for stability and efficient anterograde trafficking and prevents from proteasomal degradation. Post-translationally, proteolytically cleaved by CTSL and to a lower extent by CTSB within multivesicular bodies (MVB) and lamellar bodies (LB) leading to a mature form of 150 kDa. Highly expressed in the lung and moderately expressed in the kidney, adipose, macrophage, and spleen.

It is found in the endosome. Its subcellular location is the multivesicular body membrane. The protein resides in the cytoplasmic vesicle membrane. The protein localises to the late endosome membrane. It localises to the lysosome membrane. It catalyses the reaction a 1,2-diacyl-sn-glycero-3-phospho-(1'-sn-glycerol)(in) + ATP + H2O = a 1,2-diacyl-sn-glycero-3-phospho-(1'-sn-glycerol)(out) + ADP + phosphate + H(+). It carries out the reaction a 1,2-diacyl-sn-glycero-3-phosphocholine(in) + ATP + H2O = a 1,2-diacyl-sn-glycero-3-phosphocholine(out) + ADP + phosphate + H(+). The enzyme catalyses ATP + H2O + phospholipidSide 1 = ADP + phosphate + phospholipidSide 2.. The catalysed reaction is ATP + H2O + xenobioticSide 1 = ADP + phosphate + xenobioticSide 2.. It catalyses the reaction 1,2-dihexadecanoyl-sn-glycero-3-phosphocholine(in) + ATP + H2O = 1,2-dihexadecanoyl-sn-glycero-3-phosphocholine(out) + ADP + phosphate + H(+). It carries out the reaction cholesterol(in) + ATP + H2O = cholesterol(out) + ADP + phosphate + H(+). Catalyzes the ATP-dependent transport of phospholipids such as phosphatidylcholine and phosphoglycerol from the cytoplasm into the lumen side of lamellar bodies, in turn participates in the lamellar bodies biogenesis and homeostasis of pulmonary surfactant. Transports preferentially phosphatidylcholine containing short acyl chains. In addition plays a role as an efflux transporter of miltefosine across macrophage membranes and free cholesterol (FC) through intralumenal vesicles by removing FC from the cell as a component of surfactant and protects cells from free cholesterol toxicity. The protein is Phospholipid-transporting ATPase ABCA3 (Abca3) of Mus musculus (Mouse).